The sequence spans 275 residues: Lectin 8 (275 aa).

Residues 1–31 (MANSNPKLLVTQNPFSVFLLTFLLLITNVKS) form the signal peptide. 2 N-linked (GlcNAc...) asparagine glycosylation sites follow: Asn-55 and Asn-150.

It belongs to the leguminous lectin family.

Functionally, may be involved in arbuscular mycorrhizal (AM) symbiosis with AM fungi. The protein is Lectin 8 of Medicago truncatula (Barrel medic).